Reading from the N-terminus, the 435-residue chain is Galactose/lactose metabolism regulatory protein GAL80 (435 aa).

M1 carries the post-translational modification N-acetylmethionine.

The protein to K.lactis GAL80. As to quaternary structure, monomer.

Its function is as follows. This protein is a negative regulator for the gene expression of the lactose/galactose metabolic genes. It binds to GAL4 and so blocks transcriptional activation by it, in the absence of an inducing sugar. The chain is Galactose/lactose metabolism regulatory protein GAL80 (GAL80) from Saccharomyces cerevisiae (strain ATCC 204508 / S288c) (Baker's yeast).